We begin with the raw amino-acid sequence, 363 residues long: MDNYTYSELLKSLQNKCDNIALIIKPEKVKQKLERIEKEQEDPNFWQDVLKARDTNKEKVRLNRLLETYQKTKNALDESVELFEIAQNDNDEVTLSLLYEEAPILEHGVQKVEIEIMLSGEHDASNAIITIQPGAGGTESQDWASILYRMYLRWAERRGFKSEILDYQDGEEAGIKGVAFIIKGENAYGYLKNESGVHRLVRISPFDANAKRHTSFASVQISPELDDDIDIEIDEKDVRYDYYRASGAGGQHVNKTESAVRITHFPTGIVVQCQNDRSQHKNKASALKMLKSKLYELELEKQQSTAKNEEKSEIGWGHQIRSYVLAPYQQVKDARSNIAYSNVEAILDGDIDAILEGVLIAKA.

Glutamine 251 bears the N5-methylglutamine mark.

Belongs to the prokaryotic/mitochondrial release factor family. In terms of processing, methylated by PrmC. Methylation increases the termination efficiency of RF2.

The protein localises to the cytoplasm. Functionally, peptide chain release factor 2 directs the termination of translation in response to the peptide chain termination codons UGA and UAA. This is Peptide chain release factor 2 from Helicobacter acinonychis (strain Sheeba).